The primary structure comprises 579 residues: Plastidial pyruvate kinase 2 (579 aa).

Residues Met-1–Arg-63 constitute a chloroplast transit peptide. Over residues Ala-6–Thr-24 the composition is skewed to polar residues. Residues Ala-6–Ser-26 are disordered. Residue Arg-140 coordinates substrate. The K(+) site is built by Asn-142, Ser-144, Asp-175, and Thr-176. Asn-142 to His-145 provides a ligand contact to ATP. Arg-182 is an ATP binding site. Lys-325 provides a ligand contact to substrate. Mg(2+) is bound at residue Glu-327. The substrate site is built by Gly-350, Asp-351, and Thr-383. Residue Asp-351 coordinates Mg(2+).

The protein belongs to the pyruvate kinase family. In terms of assembly, oligomer of alpha and beta subunits. It depends on Mg(2+) as a cofactor. K(+) serves as cofactor. As to expression, mostly expressed in seeds, and, to a lower extent, in roots, leaves (veins and trichomes), inflorescences, siliques, pollen (grains and tubes) and flowers (sepals and petals).

It is found in the plastid. The protein localises to the chloroplast stroma. Its subcellular location is the mitochondrion. It catalyses the reaction pyruvate + ATP = phosphoenolpyruvate + ADP + H(+). It participates in carbohydrate degradation; glycolysis; pyruvate from D-glyceraldehyde 3-phosphate: step 5/5. Its function is as follows. Required for plastidial pyruvate kinase activity. Involved in seed oil accumulation, embryo development and seed storage compounds mobilization upon germination. The polypeptide is Plastidial pyruvate kinase 2 (PKP2) (Arabidopsis thaliana (Mouse-ear cress)).